Consider the following 30-residue polypeptide: Trypsin inhibitor 1 (30 aa).

3 disulfides stabilise this stretch: Cys4/Cys21, Cys11/Cys23, and Cys17/Cys29.

Belongs to the protease inhibitor I7 (squash-type serine protease inhibitor) family.

Its subcellular location is the secreted. Functionally, inhibits trypsin. The sequence is that of Trypsin inhibitor 1 from Citrullus lanatus (Watermelon).